A 324-amino-acid chain; its full sequence is GTPase Era (324 aa).

The Era-type G domain maps to 31–199 (KSGFIGIIGR…QELLVEHLEH (169 aa)). The tract at residues 39-46 (GRPNVGKS) is G1. 39-46 (GRPNVGKS) contributes to the GTP binding site. A G2 region spans residues 65 to 69 (QTTRN). The tract at residues 86–89 (DTPG) is G3. Residues 86–90 (DTPGI) and 148–151 (NKVD) each bind GTP. The segment at 148 to 151 (NKVD) is G4. A G5 region spans residues 178 to 180 (FSA). The 77-residue stretch at 230 to 306 (TREEVPHSVA…YLELFVKVQP (77 aa)) folds into the KH type-2 domain.

It belongs to the TRAFAC class TrmE-Era-EngA-EngB-Septin-like GTPase superfamily. Era GTPase family. Monomer.

The protein localises to the cytoplasm. The protein resides in the cell inner membrane. An essential GTPase that binds both GDP and GTP, with rapid nucleotide exchange. Plays a role in 16S rRNA processing and 30S ribosomal subunit biogenesis and possibly also in cell cycle regulation and energy metabolism. The polypeptide is GTPase Era (Nostoc sp. (strain PCC 7120 / SAG 25.82 / UTEX 2576)).